A 211-amino-acid polypeptide reads, in one-letter code: Mitotic spindle assembly checkpoint protein MAD2B (211 aa).

An HORMA domain is found at 13–203 (QVVADILCEF…SDILKMQLYV (191 aa)).

In terms of assembly, homooligomer. Interacts with rev1. Interacts with rev3l. Interacts with fzr1 (in complex with the anaphase promoting complex APC). May interact with cdc20.

The protein localises to the nucleus. Its subcellular location is the cytoplasm. It localises to the cytoskeleton. It is found in the spindle. In terms of biological role, adapter protein able to interact with different proteins and involved in different biological processes. Mediates the interaction between the error-prone DNA polymerase zeta catalytic subunit rev3l and the inserter polymerase rev1, thereby mediating the second polymerase switching in translesion DNA synthesis. Translesion DNA synthesis releases the replication blockade of replicative polymerases, stalled in presence of DNA lesions. May also play a role in signal transduction in response to DNA damage. May regulate the activation of the anaphase promoting complex APC thereby regulating progression through the cell cycle. Through transcriptional regulation may play a role in epithelial-mesenchymal transdifferentiation. The polypeptide is Mitotic spindle assembly checkpoint protein MAD2B (mad2l2) (Xenopus tropicalis (Western clawed frog)).